The chain runs to 359 residues: Heme A synthase (359 aa).

Transmembrane regions (helical) follow at residues 23-43, 85-105, 109-129, 137-157, 172-192, and 212-232; these read AVAFWLWSLAVLVFLMVVLGG, YAALFPDMDLAGFKFIFFFEW, LLGRLIGVATALPLLFFWLRG, LKLLGLLALGGLQGFVGWWMV, LAIHLILASLTFCFIVWLAAS, and AGLILLAILVQIGLGALVAGL. Histidine 276 contacts heme. Helical transmembrane passes span 278 to 298, 308 to 328, and 329 to 349; these read MVAYLVLGLTLLQVFWTSGTL, IALLGLVLAQVILGILTLVLV, and VPLWAGLLHQAFAMLVLGMAV. Histidine 337 contacts heme.

This sequence belongs to the COX15/CtaA family. Type 2 subfamily. Interacts with CtaB. Heme b serves as cofactor.

The protein localises to the cell membrane. It carries out the reaction Fe(II)-heme o + 2 A + H2O = Fe(II)-heme a + 2 AH2. Its pathway is porphyrin-containing compound metabolism; heme A biosynthesis; heme A from heme O: step 1/1. Its function is as follows. Catalyzes the conversion of heme O to heme A by two successive hydroxylations of the methyl group at C8. The first hydroxylation forms heme I, the second hydroxylation results in an unstable dihydroxymethyl group, which spontaneously dehydrates, resulting in the formyl group of heme A. This is Heme A synthase from Beijerinckia indica subsp. indica (strain ATCC 9039 / DSM 1715 / NCIMB 8712).